We begin with the raw amino-acid sequence, 459 residues long: Exodeoxyribonuclease 7 large subunit (459 aa).

It belongs to the XseA family. Heterooligomer composed of large and small subunits.

Its subcellular location is the cytoplasm. It carries out the reaction Exonucleolytic cleavage in either 5'- to 3'- or 3'- to 5'-direction to yield nucleoside 5'-phosphates.. Its function is as follows. Bidirectionally degrades single-stranded DNA into large acid-insoluble oligonucleotides, which are then degraded further into small acid-soluble oligonucleotides. The chain is Exodeoxyribonuclease 7 large subunit from Pseudomonas aeruginosa (strain ATCC 15692 / DSM 22644 / CIP 104116 / JCM 14847 / LMG 12228 / 1C / PRS 101 / PAO1).